The sequence spans 530 residues: Autoinducer-2 kinase (530 aa).

Belongs to the FGGY kinase family.

Its subcellular location is the cytoplasm. It carries out the reaction (S)-4,5-dihydroxypentane-2,3-dione + ATP = (2S)-2-hydroxy-3,4-dioxopentyl phosphate + ADP + H(+). In terms of biological role, catalyzes the phosphorylation of autoinducer-2 (AI-2) to phospho-AI-2, which subsequently inactivates the transcriptional regulator LsrR and leads to the transcription of the lsr operon. Phosphorylates the ring-open form of (S)-4,5-dihydroxypentane-2,3-dione (DPD), which is the precursor to all AI-2 signaling molecules, at the C5 position. This is Autoinducer-2 kinase from Photorhabdus laumondii subsp. laumondii (strain DSM 15139 / CIP 105565 / TT01) (Photorhabdus luminescens subsp. laumondii).